The primary structure comprises 184 residues: Ribosome-recycling factor (184 aa).

Belongs to the RRF family.

The protein resides in the cytoplasm. Its function is as follows. Responsible for the release of ribosomes from messenger RNA at the termination of protein biosynthesis. May increase the efficiency of translation by recycling ribosomes from one round of translation to another. This is Ribosome-recycling factor from Leptospira interrogans serogroup Icterohaemorrhagiae serovar copenhageni (strain Fiocruz L1-130).